Consider the following 109-residue polypeptide: Non-structural protein ORF4a (109 aa).

As to quaternary structure, interacts with host PRKRA/PACT.

It is found in the host cytoplasm. DsRNA-binding protein that plays a role in the inhibition of host innate response. Suppresses host PACT-induced activation of RIGI and MDA5 and thereby circumvents the production of type I interferons. Also prevents the activation of host NF-kappa-B. Inhibits the integrated stress response (ISR) in the infected cell by binding to dsRNA and inhibiting EIF2AK2-mediated phosphorylation of EIF2S1/eIF2-alpha. Stress granule formation is thus inhibited, which allows protein synthesis and viral replication. The sequence is that of Non-structural protein ORF4a (ORF4a) from Middle East respiratory syndrome-related coronavirus (isolate United Kingdom/H123990006/2012) (MERS-CoV).